Here is a 485-residue protein sequence, read N- to C-terminus: Amino acid permease 1 (485 aa).

The span at 1–15 (MKSFNTEGHNHSTAE) shows a compositional bias: polar residues. The segment at 1–35 (MKSFNTEGHNHSTAESGDAYTVSDPTKNVDEDGRE) is disordered. Residues 1 to 40 (MKSFNTEGHNHSTAESGDAYTVSDPTKNVDEDGREKRTGT) lie on the Cytoplasmic side of the membrane. Transmembrane regions (helical) follow at residues 41–61 (WLTA…LSLA) and 62–82 (WAIA…FSFI). At 83-129 (TYFTSTMLADCYRAPDPVTGKRNYTYMDVVRSYLGGRKVQLCGVAQY) the chain is on the cytoplasmic side. The helical transmembrane segment at 130-150 (GNLIGVTVGYTITASISLVAV) threads the bilayer. At 151-166 (GKSNCFHDKGHTADCT) the chain is on the extracellular side. The helical transmembrane segment at 167-187 (ISNYPYMAVFGIIQVILSQIP) threads the bilayer. The Cytoplasmic segment spans residues 188-194 (NFHKLSF). The helical transmembrane segment at 195–215 (LSIMAAVMSFTYATIGIGLAI) threads the bilayer. Residues 216 to 245 (ATVAGGKVGKTSMTGTAVGVDVTAAQKIWR) lie on the Extracellular side of the membrane. Residues 246–266 (SFQAVGDIAFAYAYATVLIEI) form a helical membrane-spanning segment. Residues 267–285 (QDTLRSSPAENKAMKRASL) lie on the Cytoplasmic side of the membrane. The helical transmembrane segment at 286-306 (VGVSTTTFFYILCGCIGYAAF) threads the bilayer. The Extracellular segment spans residues 307-318 (GNNAPGDFLTDF). The chain crosses the membrane as a helical span at residues 319–339 (GFFEPFWLIDFANACIAVHLI). Residues 340-394 (GAYQVFAQPIFQFVEKKCNRNYPDNKFITSEYSVNVPFLGKFNISLFRLVWRTAY) lie on the Cytoplasmic side of the membrane. A run of 2 helical transmembrane segments spans residues 395-415 (VVIT…LGLI) and 416-436 (GAAS…IAQT). The Cytoplasmic segment spans residues 437-450 (KIKKYSARWIALKT). A helical membrane pass occupies residues 451–471 (MCYVCLIVSLLAAAGSIAGLI). Over 472 to 485 (SSVKTYKPFRTMHE) the chain is Extracellular.

It belongs to the amino acid/polyamine transporter 2 family. Amino acid/auxin permease (AAAP) (TC 2.A.18.2) subfamily. Highly expressed in developing pods. Found in the endosperm and in the storage parenchyma and the outer epidermis cells of the developing embryo. Lower levels of expression in flowers, in the vascular system of the cotyledon and in the root epidermal cells, including root hairs and throughout the root tip.

It is found in the cell membrane. Its activity is regulated as follows. Inhibited by carbonylcyanide m-chlorophenylhydrazone and diethylpyrocarbonate (DEPC). Its function is as follows. Amino acid-proton symporter. Stereospecific transporter with a broad specificity for histidine, glutamate and neutral amino acids. Reduced affinities for asparagine and valine. Involved in amino acid uptake from the apoplastic cavity into the embryo cells for storage protein accumulation and in root amino acid uptake. This Arabidopsis thaliana (Mouse-ear cress) protein is Amino acid permease 1 (AAP1).